A 1529-amino-acid chain; its full sequence is Ras guanine nucleotide exchange factor B (1529 aa).

Residues 135 to 186 (ISNIEKQLSNLVNLKSNTTEQTDRKYKTNLIDFKESIIQLEKDCKNLLKQSN) are a coiled coil. 5 disordered regions span residues 290–357 (INTL…ISIN), 576–600 (TTTT…KSSH), 680–724 (KRNT…HIQQ), 847–948 (MGKE…NHNR), and 1168–1206 (QPPQ…STNL). Low complexity-rich tracts occupy residues 576 to 591 (TTTT…TTTN), 683 to 724 (TSSG…HIQQ), and 853 to 887 (NSNT…NNNE). 2 coiled-coil regions span residues 722–798 (IQQI…LNRK) and 871–898 (NNNN…ETNK). Positions 888-898 (NKNENKNETNK) are enriched in basic and acidic residues. Composition is skewed to low complexity over residues 906–916 (SSTSTLSSSTT), 924–940 (SSTN…LLPP), 1168–1187 (QPPQ…TTQP), and 1197–1206 (QPQLQQSTNL). The 131-residue stretch at 1075 to 1205 (FYRSIKYASL…PQPQLQQSTN (131 aa)) folds into the N-terminal Ras-GEF domain. In terms of domain architecture, Ras-GEF spans 1282–1517 (SSTDIAEQLT…YEQSILLEPK (236 aa)).

It is found in the cytoplasm. In terms of biological role, promotes the exchange of Ras-bound GDP by GTP. Involved in phagocytosis, fluid-phase endocytosis, regulation of macropinocytosis and control of cell movement. This Dictyostelium discoideum (Social amoeba) protein is Ras guanine nucleotide exchange factor B (gefB).